We begin with the raw amino-acid sequence, 747 residues long: Kinesin-like protein KIF3B (747 aa).

Met1 bears the N-acetylmethionine mark. Ser2 bears the N-acetylserine; in Kinesin-like protein KIF3B, N-terminally processed mark. Positions 9–340 (SVRVVVRCRP…LRYANRAKNI (332 aa)) constitute a Kinesin motor domain. Residue 96–103 (GQTGTGKT) coordinates ATP. Residues 346–579 (VNEDPKDALL…EQTQNELTRE (234 aa)) adopt a coiled-coil conformation. Disordered stretches follow at residues 374-412 (IGRRKRREKRREGGGSGGGGEEEEEEGEEGEEDGDDKDD) and 698-747 (IQVD…LVPK). Over residues 393–411 (GEEEEEEGEEGEEDGDDKD) the composition is skewed to acidic residues. The tract at residues 580–747 (LKLKHLIIEN…YPQSRGLVPK (168 aa)) is globular. Residues 701–710 (DASSFESTAS) show a composition bias toward polar residues. A compositionally biased stretch (basic residues) spans 711 to 721 (RKPKARPKSGR). The segment covering 722-735 (KSGSSSSSSGNPAS) has biased composition (low complexity).

The protein belongs to the TRAFAC class myosin-kinesin ATPase superfamily. Kinesin family. Kinesin II subfamily. As to quaternary structure, heterodimer of KIF3A and KIF3B. KIF3A/KIF3B heterodimer interacts with KIFAP3 forming a heterotrimeric (KIF3A/KIF3B/KIFAP3) complex. Interacts with the SMC3 subunit of the cohesin complex. Interacts directly with IFT20. Interacts with FLCN.

Its subcellular location is the cytoplasm. It localises to the cytoskeleton. It is found in the cell projection. The protein localises to the cilium. The protein resides in the dendritic spine. Microtubule-based molecular motor that transport intracellular cargos, such as vesicles, organelles and protein complexes. Uses ATP hydrolysis to generate force to bind and move along the microtubule. Plays a role in cilia formation. Involved in photoreceptor integrity and opsin trafficking in rod photoreceptors. Transports vesicles containing N-methyl-D-aspartate (NMDA) receptor subunit GRIN2A into neuronal dendrites. The protein is Kinesin-like protein KIF3B of Mus musculus (Mouse).